The following is a 215-amino-acid chain: Ribonuclease T (215 aa).

Residues 20 to 194 enclose the Exonuclease domain; that stretch reads VVIDVETAGF…YDTEQTAQLF (175 aa). Residues Asp23, Glu25, His181, and Asp186 each coordinate Mg(2+). The Proton donor/acceptor role is filled by His181.

This sequence belongs to the RNase T family. In terms of assembly, homodimer. Mg(2+) is required as a cofactor.

Its function is as follows. Trims short 3' overhangs of a variety of RNA species, leaving a one or two nucleotide 3' overhang. Responsible for the end-turnover of tRNA: specifically removes the terminal AMP residue from uncharged tRNA (tRNA-C-C-A). Also appears to be involved in tRNA biosynthesis. The polypeptide is Ribonuclease T (Klebsiella pneumoniae subsp. pneumoniae (strain ATCC 700721 / MGH 78578)).